A 507-amino-acid polypeptide reads, in one-letter code: MSSDKFKLDTLFDDNDEIIEPDGADVKKRNVAYYYHKDVGHFHYGQLHPMKPQRLVVCNDLVVSYEMPKYMTVVESPKLDAADISVFHTEDYVNFLQTVTPKLGLTMPDDVLRQFNIGEDCPIFAGLWDYCTLYAGGSVEGARRLNHKMNDIVINWPGGLHHAKKSEASGFCYVNDIVLGILELLKYHKRVLYIDIDIHHGDGVQEAFNNSDRVMTVSFHRFGQYFPGSGSIMDKGVGPGKYFAINVPLMAAIRDEPYLKLFESVISGVEENFNPEAIVLQCGSDSLCEDRLGQFALSFNAHARAVKYVKSLGKPLMVLGGGGYTLRNVARCWALETGVILGLRMDDEIPGTSLYSHYFTPRLLRPNLVPKMNDANSAAYLASIEKETLACLRMIRGAPSVQMQNIVGIRLDEIEQIEENERLQKSSKSSIEYEVGKVSEKMEEECFVEEDSKPPSFPPGQDPRRIGQYWGYDRSGLAPPRSHSDVIEEAKYEDRDRRKDLNIPGIP.

The histone deacetylase stretch occupies residues 29 to 342 (RNVAYYYHKD…WALETGVILG (314 aa)). The active site involves His-162. Residues 444–507 (EECFVEEDSK…RKDLNIPGIP (64 aa)) form a disordered region. Residues 482-501 (SHSDVIEEAKYEDRDRRKDL) are compositionally biased toward basic and acidic residues.

It belongs to the histone deacetylase family. HD type 1 subfamily. May be a component of a histone deacetylase complex containing saeg-2, saeg-1 and hda-2.

Its subcellular location is the nucleus. It carries out the reaction N(6)-acetyl-L-lysyl-[histone] + H2O = L-lysyl-[histone] + acetate. Functionally, probably responsible for the deacetylation of lysine residues on the N-terminal part of the core histones (H2A, H2B, H3 and H4). Histone deacetylation gives a tag for epigenetic repression and plays an important role in transcriptional regulation, cell cycle progression and developmental events. Histone deacetylases act via the formation of large multiprotein complexes. As a likely component of a histone deacetylase complex, together with saeg-1 and hda-2, functions downstream of the cAMP-dependent kinase egl-4 to regulate the expression of genes required for egg-laying and forgaging. The chain is Putative histone deacetylase 2 (hda-2) from Caenorhabditis elegans.